A 153-amino-acid polypeptide reads, in one-letter code: Coiled-coil-helix-coiled-coil-helix domain-containing protein 2 (153 aa).

2 disordered regions span residues 1 to 51 (MPRG…AAPR) and 78 to 106 (HAIT…QGAQ). Residues 14–51 (PPASRAPQMRAAPRRAPAAQPPAAAAPSAVGSPAAAPR) are compositionally biased toward low complexity. Residues 113–153 (FGPCSLEIKQFLECAQNQSDVKLCEGFNEVLRQCRIANGLM) enclose the CHCH domain. 2 short sequence motifs (cx9C motif) span residues 116-126 (CSLEIKQFLEC) and 136-146 (CEGFNEVLRQC). Cystine bridges form between Cys116/Cys146 and Cys126/Cys136.

As to quaternary structure, interacts with RBPJ.

It localises to the nucleus. Its subcellular location is the mitochondrion. It is found in the mitochondrion intermembrane space. Transcription factor. Binds to the oxygen responsive element of COX4I2 and activates its transcription under hypoxia conditions (4% oxygen), as well as normoxia conditions (20% oxygen). The sequence is that of Coiled-coil-helix-coiled-coil-helix domain-containing protein 2 (Chchd2) from Mus musculus (Mouse).